A 433-amino-acid polypeptide reads, in one-letter code: E1B 55 kDa protein (433 aa).

Belongs to the adenoviridae E1B 55 kDa protein family. As to quaternary structure, interacts with host PML-4 and PML-5; this interaction promotes efficient subnuclear targeting of E1B-55K to PML nuclear bodies. Interacts with E4-ORF3 protein. Interacts with E4-ORF6 protein.

Its subcellular location is the host nucleus. It localises to the host cytoplasm. Its function is as follows. Plays a major role to prevent cellular inhibition of viral genome replication. Assembles an SCF-like E3 ubiquitin ligase complex based on the cellular proteins ELOB, ELOC, CUL5 and RBX1, in cooperation with viral E4orf6. This viral RING-type ligase ubiquitinates cellular substrates and targets them to proteasomal degradation: TP53/p53, LIG4, MRE11-RAD50-NBS1 (MRN) complex, ITGA3, DAXX and BLM. E1B-55K probably acts as the substrate-specific adapter of the SCF-like E3 ubiquitin ligase complex. Degradation of host TP53/p53 activity is essential for preventing E1A-induced TP53 accumulation that would otherwise lead to cell apoptosis and growth arrest. E1B-55K also inactivates TP53 transcription-factor activity by binding its transactivation domain. E1B-55K also functions as a SUMO1 E3 ligase for TP53 which causes the latter to be sequestered in promyelocytic leukemia (PML) nuclear bodies thereby contributing to maximal inhibition of TP53 function. The sequence is that of E1B 55 kDa protein from Murine adenovirus A serotype 1 (MAdV-1).